The sequence spans 179 residues: Replication restart protein DnaT (179 aa).

The span at 151–168 shows a compositional bias: polar residues; sequence SRSSNGGMPQRDINSVSE. The segment at 151 to 179 is disordered; sequence SRSSNGGMPQRDINSVSEPDNHIPPGFRG.

The protein belongs to the DnaT family. In terms of assembly, homooligomerizes. Interacts with PriB. Component of the replication restart primosome. Primosome assembly occurs via a 'hand-off' mechanism. PriA binds to replication forks, subsequently PriB then DnaT bind; DnaT then displaces ssDNA to generate the helicase loading substrate.

Its function is as follows. Involved in the restart of stalled replication forks, which reloads the replicative helicase on sites other than the origin of replication. Can function in multiple replication restart pathways. Displaces ssDNA from a PriB-ssDNA complex. Probably forms a spiral filament on ssDNA. In Salmonella heidelberg (strain SL476), this protein is Replication restart protein DnaT.